The primary structure comprises 327 residues: Beta-1,4-galactosyltransferase 7 (327 aa).

The Cytoplasmic portion of the chain corresponds to 1-30 (MFPSRRKAAQLPWEDGRSGLLSGGLPRKCS). The chain crosses the membrane as a helical; Signal-anchor for type II membrane protein span at residues 31-51 (VFHLFVACLSLGFFSLLWLQL). The Lumenal portion of the chain corresponds to 52–327 (SCSGDVARAV…KTATPWCTFS (276 aa)). A disordered region spans residues 63–87 (GQGQETSGPPRACPPEPPPEHWEED). UDP-alpha-D-galactose contacts are provided by residues 100–104 (PFRER) and 139–141 (FNR). Residue N154 is glycosylated (N-linked (GlcNAc...) asparagine). UDP-alpha-D-galactose is bound by residues 164–165 (VD), Y194, and W224. Residue D165 participates in Mn(2+) binding. 226-229 (REDD) serves as a coordination point for N-acetyl-D-glucosamine. Position 257 (H257) interacts with Mn(2+). UDP-alpha-D-galactose is bound by residues 257 to 259 (HLH) and R266. C316 and C324 are oxidised to a cystine.

This sequence belongs to the glycosyltransferase 7 family. Requires Mn(2+) as cofactor. As to expression, high expression in heart, pancreas and liver, medium in placenta and kidney, low in brain, skeletal muscle and lung.

It localises to the golgi apparatus. It is found in the golgi stack membrane. The enzyme catalyses 3-O-(beta-D-xylosyl)-L-seryl-[protein] + UDP-alpha-D-galactose = 3-O-(beta-D-galactosyl-(1-&gt;4)-beta-D-xylosyl)-L-seryl-[protein] + UDP + H(+). The protein operates within protein modification; protein glycosylation. Its function is as follows. Required for the biosynthesis of the tetrasaccharide linkage region of proteoglycans, especially for small proteoglycans in skin fibroblasts. The chain is Beta-1,4-galactosyltransferase 7 (B4GALT7) from Homo sapiens (Human).